A 573-amino-acid chain; its full sequence is MSDKPLTDVTFSSFDLHPALIAGLESAGFTRCTPIQALTLPVALPGGDVAGQAQTGTGKTLAFLVAVMNRLLIRPALADRKPEDPRALILAPTRELAIQIHKDAVKFGADLGLRFALVYGGVDYDKQRELLQQGVDVIIATPGRLIDYVKQHKVVSLHACEICVLDEADRMFDLGFIKDIRFLLRRMPERGTRQTLLFSATLSHRVLELAYEHMNEPEKLVVETESITAARVRQRIYFPSDEEKQTLLLGLLSRSEGARTMVFVNTKAFVERVARTLERHGYRVGVLSGDVPQKKRESLLNRFQKGQLEILVATDVAARGLHIDGVKYVYNYDLPFDAEDYVHRIGRTARLGEEGDAISFACERYAMSLPDIEAYIEQKIPVEPVTSELLTPLPRAPRVPVEGEEADDDAGDSVGTIFREAREQRAAEEQRRGGGRSGSGGSRSGSGGGGGRREGAGADGKPRPRRKPRVEGQAPATAASTEHPVVAAAAGQAPSAGVADAERAPRKRRRRRNGRPVEGAEPAVASTPVPAPAAPRKPTQVVAKPVRAAAKPSGSPSLLSRIGRRLRSLVSGN.

A Q motif motif is present at residues 9-37 (VTFSSFDLHPALIAGLESAGFTRCTPIQA). The region spanning 40-220 (LPVALPGGDV…YEHMNEPEKL (181 aa)) is the Helicase ATP-binding domain. 53 to 60 (AQTGTGKT) lines the ATP pocket. The DEAD box motif lies at 166 to 169 (DEAD). A Helicase C-terminal domain is found at 231-393 (RVRQRIYFPS…PVTSELLTPL (163 aa)). The tract at residues 391-560 (TPLPRAPRVP…KPSGSPSLLS (170 aa)) is disordered. A compositionally biased stretch (acidic residues) spans 402–411 (EGEEADDDAG). The span at 419–432 (REAREQRAAEEQRR) shows a compositional bias: basic and acidic residues. Gly residues predominate over residues 435–450 (GRSGSGGSRSGSGGGG). Over residues 451–462 (GRREGAGADGKP) the composition is skewed to basic and acidic residues. The span at 484 to 499 (PVVAAAAGQAPSAGVA) shows a compositional bias: low complexity. The span at 505 to 514 (PRKRRRRRNG) shows a compositional bias: basic residues. Residues 541–560 (VVAKPVRAAAKPSGSPSLLS) show a composition bias toward low complexity.

Belongs to the DEAD box helicase family. RhlB subfamily. Component of the RNA degradosome, which is a multiprotein complex involved in RNA processing and mRNA degradation.

The protein resides in the cytoplasm. The enzyme catalyses ATP + H2O = ADP + phosphate + H(+). In terms of biological role, DEAD-box RNA helicase involved in RNA degradation. Has RNA-dependent ATPase activity and unwinds double-stranded RNA. The chain is ATP-dependent RNA helicase RhlB from Xanthomonas euvesicatoria pv. vesicatoria (strain 85-10) (Xanthomonas campestris pv. vesicatoria).